We begin with the raw amino-acid sequence, 160 residues long: Endoribonuclease YbeY (160 aa).

Residues His-127, His-131, and His-137 each coordinate Zn(2+).

This sequence belongs to the endoribonuclease YbeY family. The cofactor is Zn(2+).

The protein localises to the cytoplasm. In terms of biological role, single strand-specific metallo-endoribonuclease involved in late-stage 70S ribosome quality control and in maturation of the 3' terminus of the 16S rRNA. This is Endoribonuclease YbeY from Synechococcus sp. (strain RCC307).